Reading from the N-terminus, the 429-residue chain is Keratin, type I cytoskeletal 20 (429 aa).

The tract at residues M1–S26 is disordered. The segment at M1 to N74 is head. Low complexity predominate over residues R10–S26. 3 positions are modified to phosphoserine: S13, S16, and S26. A coil 1A region spans residues E75–W110. Residues E75 to T386 enclose the IF rod domain. The linker 1 stretch occupies residues Y111–Q128. Residues I129–L220 are coil 1B. Positions R221–I243 are linker 12. The coil 2 stretch occupies residues M244–E382. The segment at D383–I429 is tail.

It belongs to the intermediate filament family. Heterotetramer of two type I and two type II keratins. Associates with KRT8. In terms of processing, hyperphosphorylation at Ser-13 occurs during the early stages of apoptosis but becomes less prominent during the later stages. Phosphorylation at Ser-13 also increases in response to stress brought on by cell injury. Post-translationally, proteolytically cleaved by caspases during apoptosis. Cleavage occurs at Asp-233. Expressed predominantly in the intestinal epithelium in differentiated villus cells.

Its function is as follows. Plays a significant role in maintaining keratin filament organization in intestinal epithelia. When phosphorylated, plays a role in the secretion of mucin in the small intestine. The chain is Keratin, type I cytoskeletal 20 (Krt20) from Rattus norvegicus (Rat).